A 264-amino-acid polypeptide reads, in one-letter code: tRNA pseudouridine synthase A (264 aa).

Asp-51 (nucleophile) is an active-site residue. Tyr-109 provides a ligand contact to substrate.

This sequence belongs to the tRNA pseudouridine synthase TruA family. Homodimer.

The catalysed reaction is uridine(38/39/40) in tRNA = pseudouridine(38/39/40) in tRNA. In terms of biological role, formation of pseudouridine at positions 38, 39 and 40 in the anticodon stem and loop of transfer RNAs. The chain is tRNA pseudouridine synthase A from Actinobacillus succinogenes (strain ATCC 55618 / DSM 22257 / CCUG 43843 / 130Z).